Here is a 338-residue protein sequence, read N- to C-terminus: tRNA N6-adenosine threonylcarbamoyltransferase (338 aa).

2 residues coordinate Fe cation: His-111 and His-115. Residues 134 to 138 (LVSGG), Asp-167, Gly-180, and Asn-272 each bind substrate. Asp-300 contributes to the Fe cation binding site.

It belongs to the KAE1 / TsaD family. It depends on Fe(2+) as a cofactor.

It is found in the cytoplasm. It catalyses the reaction L-threonylcarbamoyladenylate + adenosine(37) in tRNA = N(6)-L-threonylcarbamoyladenosine(37) in tRNA + AMP + H(+). In terms of biological role, required for the formation of a threonylcarbamoyl group on adenosine at position 37 (t(6)A37) in tRNAs that read codons beginning with adenine. Is involved in the transfer of the threonylcarbamoyl moiety of threonylcarbamoyl-AMP (TC-AMP) to the N6 group of A37, together with TsaE and TsaB. TsaD likely plays a direct catalytic role in this reaction. The polypeptide is tRNA N6-adenosine threonylcarbamoyltransferase (Aliivibrio fischeri (strain MJ11) (Vibrio fischeri)).